The following is a 552-amino-acid chain: Outer dynein arm protein 1 (552 aa).

The disordered stretch occupies residues 1 to 27 (MPSADATRGGGSAGSMGKGTLGAGDTL). Gly residues predominate over residues 8 to 22 (RGGGSAGSMGKGTLG). Coiled-coil stretches lie at residues 28 to 59 (GHKS…LENK), 120 to 260 (SAKE…QELL), and 331 to 395 (TLFN…YEKR). 2 disordered regions span residues 482 to 515 (NRII…TREH) and 528 to 552 (LETA…PTRR). A compositionally biased stretch (acidic residues) spans 493–506 (QEEEVEGLEPEPVE).

This sequence belongs to the ODA1/DCC2 family. In terms of assembly, component of the outer dynein arm complex.

The protein resides in the cytoplasm. Its subcellular location is the cytoskeleton. It is found in the cilium axoneme. In terms of biological role, component of the outer dynein arm complex required for assembly of the outer dynein arm-docking complex (ODA-DC) and the outer dynein arm onto the doublet microtubule. This is Outer dynein arm protein 1 (ODA1) from Chlamydomonas reinhardtii (Chlamydomonas smithii).